A 298-amino-acid polypeptide reads, in one-letter code: ADP/ATP translocase 1 (298 aa).

The Mitochondrial intermembrane portion of the chain corresponds to 1–7 (MSDQALS). Ser2 bears the N-acetylserine mark. One copy of the Solcar 1 repeat lies at 6 to 98 (LSFLKDFLAG…FAFKDKYKQI (93 aa)). Residue Ser7 is modified to Phosphoserine. Residues 8–37 (FLKDFLAGGVAAAVSKTAVAPIERVKLLLQ) form a helical membrane-spanning segment. The Mitochondrial matrix segment spans residues 38 to 74 (VQHASKQISAEKQYKGIIDCVVRIPKEQGFLSFWRGN). At Lys52 the chain carries N6,N6,N6-trimethyllysine. Residues 75–99 (LANVIRYFPTQALNFAFKDKYKQIF) form a helical membrane-spanning segment. Positions 80 and 92 each coordinate ADP. Over 100 to 109 (LGGVDRHKQF) the chain is Mitochondrial intermembrane. The chain crosses the membrane as a helical span at residues 110–130 (WRYFAGNLASGGAAGATSLCF). Solcar repeat units lie at residues 111–201 (RYFA…AKGM) and 212–297 (VSWM…IKKY). Over 131 to 178 (VYPLDFARTRLAADVGKGAAQREFSGLGNCLTKIFKSDGLRGLYQGFN) the chain is Mitochondrial matrix. At Lys147 the chain carries N6-succinyllysine. Cys160 carries the post-translational modification S-nitrosocysteine. Residues 179 to 199 (VSVQGIIIYRAAYFGVYDTAK) form a helical membrane-spanning segment. At 200–210 (GMLPDPKNVHI) the chain is on the mitochondrial intermembrane side. Residues 211–231 (IVSWMIAQTVTAVAGLVSYPF) traverse the membrane as a helical segment. The Mitochondrial matrix segment spans residues 232 to 273 (DTVRRRMMMQSGRKGADIMYTGTVDCWKKIAKDEGAKAFFKG). Arg235 contacts ADP. The tract at residues 235–240 (RRRMMM) is important for transport activity. The Nucleotide carrier signature motif motif lies at 235–240 (RRRMMM). Lys245 and Lys272 each carry N6-succinyllysine. A helical transmembrane segment spans residues 274-291 (AWSNVLRGMGGAFVLVLY). Over 292–298 (DEIKKYV) the chain is Mitochondrial intermembrane.

Belongs to the mitochondrial carrier (TC 2.A.29) family. Monomer. Found in a complex with ARL2, ARL2BP and SLC25A4/ANT1. Interacts with ARL2BP. Interacts with TIMM44; leading to inhibit the presequence translocase TIMM23, thereby promoting stabilization of PINK1. Under cell death induction, transglutaminated by TGM2. Transglutamination leads to formation of covalent cross-links between a glutamine and the epsilon-amino group of a lysine residue, forming polymers.

Its subcellular location is the mitochondrion inner membrane. The protein resides in the membrane. The catalysed reaction is ADP(in) + ATP(out) = ADP(out) + ATP(in). The enzyme catalyses H(+)(in) = H(+)(out). The matrix-open state (m-state) is inhibited by the membrane-permeable bongkrekic acid (BKA). The cytoplasmic-open state (c-state) is inhibited by the membrane-impermeable toxic inhibitor carboxyatractyloside (CATR). Proton transporter activity is inhibited by ADP:ATP antiporter activity. ADP:ATP antiporter that mediates import of ADP into the mitochondrial matrix for ATP synthesis, and export of ATP out to fuel the cell. Cycles between the cytoplasmic-open state (c-state) and the matrix-open state (m-state): operates by the alternating access mechanism with a single substrate-binding site intermittently exposed to either the cytosolic (c-state) or matrix (m-state) side of the inner mitochondrial membrane. In addition to its ADP:ATP antiporter activity, also involved in mitochondrial uncoupling and mitochondrial permeability transition pore (mPTP) activity. Plays a role in mitochondrial uncoupling by acting as a proton transporter: proton transport uncouples the proton flows via the electron transport chain and ATP synthase to reduce the efficiency of ATP production and cause mitochondrial thermogenesis. Proton transporter activity is inhibited by ADP:ATP antiporter activity, suggesting that SLC25A4/ANT1 acts as a master regulator of mitochondrial energy output by maintaining a delicate balance between ATP production (ADP:ATP antiporter activity) and thermogenesis (proton transporter activity). Proton transporter activity requires free fatty acids as cofactor, but does not transport it. Probably mediates mitochondrial uncoupling in tissues that do not express UCP1. Also plays a key role in mPTP opening, a non-specific pore that enables free passage of the mitochondrial membranes to solutes of up to 1.5 kDa, and which contributes to cell death. It is however unclear if SLC25A4/ANT1 constitutes a pore-forming component of mPTP or regulates it. Acts as a regulator of mitophagy independently of ADP:ATP antiporter activity: promotes mitophagy via interaction with TIMM44, leading to inhibit the presequence translocase TIMM23, thereby promoting stabilization of PINK1. In Oryctolagus cuniculus (Rabbit), this protein is ADP/ATP translocase 1.